The chain runs to 159 residues: Phosphopantetheine adenylyltransferase (159 aa).

Substrate is bound at residue Ser9. ATP-binding positions include 9–10 and His17; that span reads SF. Positions 41, 73, and 87 each coordinate substrate. ATP-binding positions include 88 to 90, Glu98, and 122 to 128; these read GLR and WGYVSSS.

It belongs to the bacterial CoaD family. In terms of assembly, homohexamer. It depends on Mg(2+) as a cofactor.

The protein localises to the cytoplasm. The enzyme catalyses (R)-4'-phosphopantetheine + ATP + H(+) = 3'-dephospho-CoA + diphosphate. It functions in the pathway cofactor biosynthesis; coenzyme A biosynthesis; CoA from (R)-pantothenate: step 4/5. Reversibly transfers an adenylyl group from ATP to 4'-phosphopantetheine, yielding dephospho-CoA (dPCoA) and pyrophosphate. The protein is Phosphopantetheine adenylyltransferase of Nocardioides sp. (strain ATCC BAA-499 / JS614).